Reading from the N-terminus, the 1521-residue chain is Lysophospholipase NTE1 (1521 aa).

Over 1–50 (MDVVNSTARAAVTSATAVTAVTGTGDRHPNPLSSAVAAASDVANAHGSSS) the chain is Cytoplasmic. A helical membrane pass occupies residues 51–71 (WLGLFARVVLWLLQFVSMVLY). Residues 72–96 (YAIKLATISVPTLLYTLFSTSLTVT) lie on the Lumenal side of the membrane. The chain crosses the membrane as a helical span at residues 97 to 117 (MNATTLMLIVAAMIGAISWVV). At 118–1521 (RYRYLNMYSR…RTMAPRRASI (1404 aa)) the chain is on the cytoplasmic side. Disordered stretches follow at residues 280-301 (HADEDNSEPGTTTHSGLFPNYP), 315-372 (SVPN…SAHP), and 738-768 (HAMDSAQSIRSPQRSPQPFAESMRSGNKVDD). Polar residues-rich tracts occupy residues 316–334 (VPNTPQMDASASSSANNLP) and 738–753 (HAMDSAQSIRSPQRSP). A nucleoside 3',5'-cyclic phosphate is bound by residues 670-789 (PASP…GGLA) and 837-957 (RLTN…IASR). The 165-residue stretch at 1217 to 1381 (LVLGGGGARG…VDNLTVSHMK (165 aa)) folds into the PNPLA domain. Residues 1221 to 1226 (GGGARG) carry the GXGXXG motif. The GXSXG motif lies at 1248 to 1252 (GTSIG). Catalysis depends on Ser-1250, which acts as the Nucleophile. The active-site Proton acceptor is Asp-1368. Residues 1368-1370 (DGG) carry the DGA/G motif.

It belongs to the NTE family.

Its subcellular location is the endoplasmic reticulum membrane. It catalyses the reaction a 1-acyl-sn-glycero-3-phosphocholine + H2O = sn-glycerol 3-phosphocholine + a fatty acid + H(+). Inhibited by organophosphorus esters. Its function is as follows. Intracellular phospholipase B that catalyzes the double deacylation of phosphatidylcholine (PC) to glycerophosphocholine (GroPCho). Plays an important role in membrane lipid homeostasis. Responsible for the rapid PC turnover in response to inositol, elevated temperatures, or when choline is present in the growth medium. The polypeptide is Lysophospholipase NTE1 (NTE1) (Chaetomium globosum (strain ATCC 6205 / CBS 148.51 / DSM 1962 / NBRC 6347 / NRRL 1970) (Soil fungus)).